A 525-amino-acid polypeptide reads, in one-letter code: GMP synthase [glutamine-hydrolyzing] (525 aa).

Residues Arg9–Leu207 form the Glutamine amidotransferase type-1 domain. Cys86 acts as the Nucleophile in catalysis. Catalysis depends on residues His181 and Glu183. The 193-residue stretch at Trp208 to Arg400 folds into the GMPS ATP-PPase domain. Ser235–Ser241 provides a ligand contact to ATP.

In terms of assembly, homodimer.

It catalyses the reaction XMP + L-glutamine + ATP + H2O = GMP + L-glutamate + AMP + diphosphate + 2 H(+). The protein operates within purine metabolism; GMP biosynthesis; GMP from XMP (L-Gln route): step 1/1. Its function is as follows. Catalyzes the synthesis of GMP from XMP. The sequence is that of GMP synthase [glutamine-hydrolyzing] from Salmonella typhi.